A 582-amino-acid chain; its full sequence is Actin-histidine N-methyltransferase (582 aa).

S-adenosyl-L-methionine is bound by residues Arg75, 104–106 (EGF), Arg254, 275–279 (DMCNH), and 325–327 (NGF). The 221-residue stretch at 94–314 (DGFELVEFPE…SGEQIYIFYG (221 aa)) folds into the SET domain. The disordered stretch occupies residues 550 to 582 (DKDLLPNGTKSENDSFLAEDNQQETGNAKDFCS).

This sequence belongs to the class V-like SAM-binding methyltransferase superfamily. SETD3 actin-histidine methyltransferase family.

Its subcellular location is the cytoplasm. It catalyses the reaction L-histidyl-[protein] + S-adenosyl-L-methionine = N(tele)-methyl-L-histidyl-[protein] + S-adenosyl-L-homocysteine + H(+). In terms of biological role, protein-histidine N-methyltransferase that specifically mediates 3-methylhistidine (tele-methylhistidine) methylation of actin at 'His-73'. Does not have protein-lysine N-methyltransferase activity and probably only catalyzes histidine methylation of actin. This is Actin-histidine N-methyltransferase from Xenopus tropicalis (Western clawed frog).